A 143-amino-acid polypeptide reads, in one-letter code: Hemoglobin subunit alpha-1 (143 aa).

Ser-2 bears the N-acetylserine mark. In terms of domain architecture, Globin spans 2 to 143; that stretch reads SLTEKDKAAV…VSLALAERYR (142 aa). His-60 contacts O2. Position 89 (His-89) interacts with heme b.

Belongs to the globin family. In terms of assembly, hb 1 is a heterotetramer of two alpha-1 and two beta chains. Red blood cells.

In terms of biological role, involved in oxygen transport from gills to the various peripheral tissues. This is Hemoglobin subunit alpha-1 (hba1) from Cottoperca gobio (Frogmouth).